The primary structure comprises 148 residues: Protein Turandot Z (148 aa).

A signal peptide spans 1–23 (MYFAIRLSFVLAVLFCLTGNGSA).

It belongs to the Turandot family.

The protein localises to the secreted. Its function is as follows. A humoral factor that may play a role in stress tolerance. This chain is Protein Turandot Z, found in Drosophila simulans (Fruit fly).